Consider the following 368-residue polypeptide: tRNA-specific 2-thiouridylase MnmA (368 aa).

ATP contacts are provided by residues 11–18 (GMSGGVDS) and M37. Residues 97 to 99 (NPD) form an interaction with target base in tRNA region. The active-site Nucleophile is the C102. C102 and C199 are oxidised to a cystine. Position 127 (G127) interacts with ATP. An interaction with tRNA region spans residues 149–151 (KDQ). Catalysis depends on C199, which acts as the Cysteine persulfide intermediate. The tract at residues 311–312 (RY) is interaction with tRNA.

It belongs to the MnmA/TRMU family. In terms of assembly, interacts with TusE.

The protein resides in the cytoplasm. It carries out the reaction S-sulfanyl-L-cysteinyl-[protein] + uridine(34) in tRNA + AH2 + ATP = 2-thiouridine(34) in tRNA + L-cysteinyl-[protein] + A + AMP + diphosphate + H(+). Functionally, catalyzes the 2-thiolation of uridine at the wobble position (U34) of tRNA(Lys), tRNA(Glu) and tRNA(Gln), leading to the formation of s(2)U34, the first step of tRNA-mnm(5)s(2)U34 synthesis. Sulfur is provided by IscS, via a sulfur-relay system. Binds ATP and its substrate tRNAs. This Escherichia coli O139:H28 (strain E24377A / ETEC) protein is tRNA-specific 2-thiouridylase MnmA.